A 141-amino-acid polypeptide reads, in one-letter code: uncharacterized protein (141 aa).

The segment at 1–61 is disordered; that stretch reads IRLLHSLTPP…PPPPPPPRRA (61 aa). The span at 8 to 58 shows a compositional bias: pro residues; sequence TPPPPPPPPPPPPPPPPPPPPPPPPPPPPPPPPPPPPPPPPPPPPPPPPPP. Residues 98 to 116 constitute a DNA-binding region (H-T-H motif); that stretch reads KRLLVAYPVRHFLSAACQF.

This is an uncharacterized protein from Owenia fusiformis (Polychaete worm).